We begin with the raw amino-acid sequence, 394 residues long: Elongation factor Tu (394 aa).

Positions 10–204 (KPHVNIGTIG…AVDSYIPQPV (195 aa)) constitute a tr-type G domain. A G1 region spans residues 19 to 26 (GHVDHGKT). 19–26 (GHVDHGKT) contacts GTP. Residue threonine 26 coordinates Mg(2+). The segment at 60–64 (GITIS) is G2. Residues 81–84 (DCPG) form a G3 region. Residues 81 to 85 (DCPGH) and 136 to 139 (NKVD) contribute to the GTP site. The tract at residues 136–139 (NKVD) is G4. The segment at 174–176 (SAL) is G5.

This sequence belongs to the TRAFAC class translation factor GTPase superfamily. Classic translation factor GTPase family. EF-Tu/EF-1A subfamily. In terms of assembly, monomer.

The protein resides in the cytoplasm. The catalysed reaction is GTP + H2O = GDP + phosphate + H(+). GTP hydrolase that promotes the GTP-dependent binding of aminoacyl-tRNA to the A-site of ribosomes during protein biosynthesis. The polypeptide is Elongation factor Tu (Rickettsia rhipicephali).